The sequence spans 283 residues: Probable voltage-dependent anion-selective channel (283 aa).

Belongs to the eukaryotic mitochondrial porin family.

It is found in the mitochondrion outer membrane. In terms of biological role, forms a channel through the cell membrane that allows diffusion of small hydrophilic molecules. Plays a role in maintaining mitochondrial morphology. This chain is Probable voltage-dependent anion-selective channel, found in Caenorhabditis elegans.